The chain runs to 321 residues: Geranylgeranyl transferase type-2 subunit beta 1 (321 aa).

N-acetylserine is present on Ser-2. PFTB repeat units lie at residues 14-55, 62-103, 110-151, 158-199, 206-247, and 254-296; these read ADKH…DLLD, EEEV…ALFD, IGKV…SILK, VEKA…AITG, KDSL…IMID, and KAKL…SLLE. Residues 184 to 186 and 226 to 229 contribute to the geranylgeranyl diphosphate site; these read HAG and RPEK. Zn(2+)-binding residues include Asp-232 and Cys-234. 235-238 serves as a coordination point for geranylgeranyl diphosphate; sequence YSWW. Zn(2+) is bound at residue His-284.

The protein belongs to the protein prenyltransferase subunit beta family. Heterotrimer composed of the alpha subunit RGTA, the beta subunit RGTB and REP; within this trimer, RGTA and RGTB form the catalytic component, while REP mediates peptide substrate binding. The cofactor is Zn(2+). Mg(2+) is required as a cofactor.

It carries out the reaction geranylgeranyl diphosphate + L-cysteinyl-[protein] = S-geranylgeranyl-L-cysteinyl-[protein] + diphosphate. With respect to regulation, the enzymatic reaction requires the aid of the Rab escort protein REP. In terms of biological role, catalyzes the transfer of a geranylgeranyl moiety from geranylgeranyl diphosphate to both cysteines of Rab proteins with the C-terminal sequence -CCXX, CXXX, -XCCX and -XCXC, such as RABA1A, RABA2A, RABF2A and RABG2. Involved in the geranylgeranylation of RABA2A. In vitro, can prenylate PGGTI targets with the C-terminal sequence Cys-aliphatic-aliphatic-X (CaaX) with leucine in the terminal position. Substrates with the C-terminal sequence -CSIL such as ARAC11/ROP1 or GG2/AGG2 are prenylated independently of REP and when the beta subunit is associated with the alpha subunit RGTA1. Required for male fertility and root tip growth. In Arabidopsis thaliana (Mouse-ear cress), this protein is Geranylgeranyl transferase type-2 subunit beta 1.